A 685-amino-acid chain; its full sequence is Sodium-dependent phosphate transporter 1-A (685 aa).

6 helical membrane passes run 21–41, 66–86, 106–126, 162–182, 207–227, and 234–254; these read IMAPYLWMLVLGFVIAFVLAF, ACILASIFETVGSVLLGAKVS, LMAGSISAMFGSAVWQLAASF, IVLSWFISPLLSGIMSALLFL, ACTIGINLFSIMFTGAPLLGF, and GIILISVGCAVLCALIVWFVV. 2 disordered regions span residues 438–458 and 483–513; these read RNRDTEARPDEAEKSTVHGAD and EAEEQEEGSVEDVETDRKSSSSSLEERHDQD. Acidic residues predominate over residues 483-496; sequence EAEEQEEGSVEDVE. Positions 497 to 513 are enriched in basic and acidic residues; sequence TDRKSSSSSLEERHDQD. The next 4 helical transmembrane spans lie at 517 to 537, 565 to 585, 606 to 626, and 656 to 676; these read VSLLFQFLQILTACFGSFAHG, ATPIWLLLYGGIGICIGLWVW, FSIELASALTVVIASNVGLPI, and IFLAWFVTVPISGLISAGIMA.

This sequence belongs to the inorganic phosphate transporter (PiT) (TC 2.A.20) family.

The protein localises to the membrane. In terms of biological role, sodium-phosphate symporter which plays a fundamental housekeeping role in phosphate transport. The protein is Sodium-dependent phosphate transporter 1-A (slc20a1-a) of Xenopus laevis (African clawed frog).